A 256-amino-acid chain; its full sequence is Thioredoxin-dependent peroxide reductase, mitochondrial (256 aa).

Residues 1-61 (MAAAVGRLLR…KLFSTSSSYH (61 aa)) constitute a mitochondrion transit peptide. The Thioredoxin domain occupies 63 to 221 (PAVTQHAPYF…TLRLVKAFQY (159 aa)). At Lys-83 the chain carries N6-succinyllysine. Lys-91 bears the N6-acetyllysine; alternate mark. An N6-succinyllysine; alternate modification is found at Lys-91. The Cysteine sulfenic acid (-SOH) intermediate role is filled by Cys-108. A Phosphothreonine modification is found at Thr-146.

It belongs to the peroxiredoxin family. AhpC/Prx1 subfamily. In terms of assembly, homodimer; disulfide-linked, upon oxidation. 6 homodimers assemble to form a ring-like dodecamer. Interacts with NEK6. Interacts with LRRK2. Interacts with MAP3K13. Interacts with RPS6KC1 (via PX domain). Phosphorylated by LRRK2; phosphorylation reduces perodixase activity. Post-translationally, the enzyme can be inactivated by further oxidation of the cysteine sulfenic acid (C(P)-SOH) to sulphinic acid (C(P)-SO2H) and sulphonic acid (C(P)-SO3H) instead of its condensation to a disulfide bond. In terms of processing, S-palmitoylated.

The protein localises to the mitochondrion. It localises to the cytoplasm. The protein resides in the early endosome. The catalysed reaction is a hydroperoxide + [thioredoxin]-dithiol = an alcohol + [thioredoxin]-disulfide + H2O. Thiol-specific peroxidase that catalyzes the reduction of hydrogen peroxide and organic hydroperoxides to water and alcohols, respectively. Plays a role in cell protection against oxidative stress by detoxifying peroxides. Acts synergistically with MAP3K13 to regulate the activation of NF-kappa-B in the cytosol. Required for the maintenance of physical strength. This chain is Thioredoxin-dependent peroxide reductase, mitochondrial (PRDX3), found in Pongo abelii (Sumatran orangutan).